The primary structure comprises 203 residues: UPF0637 protein SSP1683 (203 aa).

The protein belongs to the UPF0637 family.

This chain is UPF0637 protein SSP1683, found in Staphylococcus saprophyticus subsp. saprophyticus (strain ATCC 15305 / DSM 20229 / NCIMB 8711 / NCTC 7292 / S-41).